Reading from the N-terminus, the 156-residue chain is AP-1 complex subunit sigma-1 (156 aa).

The protein belongs to the adaptor complexes small subunit family. In terms of assembly, adapter protein complex 1 (AP-1) is a heterotetramer composed of two large adaptins (gamma-type subunit APL4 and beta-type subunit APL2), a medium adaptin (mu-type subunit APM1) and a small adaptin (sigma-type subunit APS1). AP-1 interacts with clathrin. Also a component of the AP-1R complex composed of at least APM2, APL4 and APS1.

It is found in the cytoplasm. Its subcellular location is the nucleus. The protein localises to the cytoplasmic vesicle. It localises to the clathrin-coated vesicle membrane. The protein resides in the endosome. It is found in the golgi apparatus. Component of the adapter complexes which link clathrin to receptors in coated vesicles. Clathrin-associated protein complexes are believed to interact with the cytoplasmic tails of membrane proteins, leading to their selection and concentration. AP19 is probably a subunit of the Golgi membrane adapter. Component of the AP-1-related (AP-1R) complex, an adapter protein complex that mediates sorting of cargo SNARE SNC1. In contrast to the APM1-containing AP-1 complex, AP-1R is incapable of sorting CHS3. In Saccharomyces cerevisiae (strain ATCC 204508 / S288c) (Baker's yeast), this protein is AP-1 complex subunit sigma-1 (APS1).